Here is an 868-residue protein sequence, read N- to C-terminus: MNPGEMRPSACLLLLAGLQLSILVPTEANDFSSFLSANASLAVVVDHEYMTVHGENILAHFEKILSDVIRENLRNGGINVKYFSWNAVRLKKDFLAAITVTDCENTWNFYKNTQETSILLIAITDSDCPRLPLNRALMVPIVENGDEFPQLILDAKVQQILNWKTAVVFVDQTILEENALLVKSIVHESITNHITPISLILYEINDSLRGQQKRVALRQALSQFAPKKHEEMRQQFLVISAFHEDIIEIAETLNMFHVGNQWMIFVLDMVARDFDAGTVTINLDEGANIAFALNETDPNCQDSLNCTISEISLALVNAISKITVEEESIYGEISDEEWEAIRFTKQEKQAEILEYMKEFLKTNAKCSSCARWRVETAITWGKSQENRKFRSTPQRDAKNRNFEFINIGYWTPVLGFVCQELAFPHIEHHFRNITMDILTVHNPPWQILTKNSNGVIVEHKGIVMEIVKELSRALNFSYYLHEASAWKEEDSLSTSAGGNESDELVGSMTFRIPYRVVEMVQGNQFFIAAVAATVEDPDQKPFNYTQPISVQKYSFITRKPDEVSRIYLFTAPFTVETWFCLMGIILLTAPTLYAINRLAPLKEMRIVGLSTVKSCFWYIFGALLQQGGMYLPTADSGRLVVGFWWIVVIVLVTTYCGNLVAFLTFPKFQPGVDYLNQLEDHKDIVQYGLRNGTFFERYVQSTTREDFKHYLERAKIYGSAQEEDIEAVKRGERINIDWRINLQLIVQRHFEREKECHFALGRESFVDEQIAMIVPAQSAYLHLVNRHIKSMFRMGFIERWHQMNLPSAGKCNGKSAQRQVTNHKVNMDDMQGCFLVLLLGFTLALLIVCGEFWYRRFRASRKRRQFTN.

The signal sequence occupies residues 1 to 28; the sequence is MNPGEMRPSACLLLLAGLQLSILVPTEA. At 29-565 the chain is on the extracellular side; the sequence is NDFSSFLSAN…ITRKPDEVSR (537 aa). N38, N205, N294, N305, N432, N475, N499, and N543 each carry an N-linked (GlcNAc...) asparagine glycan. The helical transmembrane segment at 566 to 586 threads the bilayer; sequence IYLFTAPFTVETWFCLMGIIL. At 587 to 642 the chain is on the cytoplasmic side; the sequence is LTAPTLYAINRLAPLKEMRIVGLSTVKSCFWYIFGALLQQGGMYLPTADSGRLVVG. Residues 643 to 663 form a helical membrane-spanning segment; it reads FWWIVVIVLVTTYCGNLVAFL. At 664 to 832 the chain is on the extracellular side; the sequence is TFPKFQPGVD…HKVNMDDMQG (169 aa). N-linked (GlcNAc...) asparagine glycosylation occurs at N691. A helical membrane pass occupies residues 833–853; that stretch reads CFLVLLLGFTLALLIVCGEFW. Topologically, residues 854–868 are cytoplasmic; the sequence is YRRFRASRKRRQFTN.

Belongs to the glutamate-gated ion channel (TC 1.A.10.1) family. In the antenna, detected in sacculus neurons which innervate the first and second chambers (at protein level). Expressed in multiple cells of the larval dorsal organ ganglion, including the dorsal organ cool cells where it is predominately localized to the dendritic bulbs (at protein level).

Its subcellular location is the cell membrane. Its function is as follows. Integral part of various neural sensory systems in the antenna that provide the neural basis for the response to environmental changes in temperature (thermosensation) and humidity (hygrosensation). Together with Ir21a and Ir25a, mediates the response of the larval dorsal organ cool cells, a trio of cool-responsive neurons, to cooling and is required for cool avoidance behavior. Together with Ir25a and Ir40a, mediates the response of the hydrosensory sacculus neurons to changes in relative humidity, and is required for dry detection and humidiy preference behavior. The polypeptide is Ionotropic receptor 93a (Drosophila melanogaster (Fruit fly)).